Reading from the N-terminus, the 88-residue chain is Bombyxin B-8 (88 aa).

A signal peptide spans M1–G18. 3 disulfides stabilise this stretch: C28–C74, C40–C87, and C73–C78. Residues G47 to G65 constitute a propeptide, c peptide like.

The protein belongs to the insulin family. Heterodimer of a B chain and an A chain linked by two disulfide bonds.

The protein resides in the secreted. Functionally, brain peptide responsible for activation of prothoracic glands to produce ecdysone in insects. This is Bombyxin B-8 (BBXB8) from Bombyx mori (Silk moth).